The sequence spans 210 residues: Neuroendocrine protein 7B2 (210 aa).

Residues 1–24 form the signal peptide; that stretch reads MTSRMAILSGLLFWLLLEWNPAFA. An intrachain disulfide couples cysteine 118 to cysteine 128. Phosphoserine is present on residues serine 139 and serine 203.

Belongs to the 7B2 family. Interacts with PCSK2/PC2 early in the secretory pathway. Dissociation occurs at later stages. In terms of processing, proteolytically cleaved in the Golgi by a furin-like convertase to generate bioactive peptides. Post-translationally, sulfated on tyrosine residues.

The protein localises to the secreted. Functionally, acts as a molecular chaperone for PCSK2/PC2, preventing its premature activation in the regulated secretory pathway. Binds to inactive PCSK2 in the endoplasmic reticulum and facilitates its transport from there to later compartments of the secretory pathway where it is proteolytically matured and activated. Also required for cleavage of PCSK2 but does not appear to be involved in its folding. Plays a role in regulating pituitary hormone secretion. The C-terminal peptide inhibits PCSK2 in vitro. In Rattus norvegicus (Rat), this protein is Neuroendocrine protein 7B2 (Scg5).